The sequence spans 421 residues: D-inositol 3-phosphate glycosyltransferase (421 aa).

His-9 serves as a coordination point for 1D-myo-inositol 3-phosphate. UDP-N-acetyl-alpha-D-glucosamine is bound by residues 15 to 16 and Gly-23; that span reads QP. 1D-myo-inositol 3-phosphate-binding positions include 20–25, Lys-78, Tyr-110, Thr-134, and Arg-154; that span reads DAGGMN. UDP-N-acetyl-alpha-D-glucosamine-binding residues include Arg-231, Lys-236, and Arg-294. 3 residues coordinate Mg(2+): Tyr-303, Gln-304, and Ala-306. Residues Glu-316 and Glu-324 each contribute to the UDP-N-acetyl-alpha-D-glucosamine site. Thr-330 contributes to the Mg(2+) binding site.

Belongs to the glycosyltransferase group 1 family. MshA subfamily. In terms of assembly, homodimer.

The enzyme catalyses 1D-myo-inositol 3-phosphate + UDP-N-acetyl-alpha-D-glucosamine = 1D-myo-inositol 2-acetamido-2-deoxy-alpha-D-glucopyranoside 3-phosphate + UDP + H(+). Catalyzes the transfer of a N-acetyl-glucosamine moiety to 1D-myo-inositol 3-phosphate to produce 1D-myo-inositol 2-acetamido-2-deoxy-glucopyranoside 3-phosphate in the mycothiol biosynthesis pathway. The chain is D-inositol 3-phosphate glycosyltransferase from Corynebacterium aurimucosum (strain ATCC 700975 / DSM 44827 / CIP 107346 / CN-1) (Corynebacterium nigricans).